We begin with the raw amino-acid sequence, 81 residues long: Large ribosomal subunit protein eL31 (81 aa).

This sequence belongs to the eukaryotic ribosomal protein eL31 family.

The sequence is that of Large ribosomal subunit protein eL31 (rpl31e) from Methanothermobacter thermautotrophicus (strain ATCC 29096 / DSM 1053 / JCM 10044 / NBRC 100330 / Delta H) (Methanobacterium thermoautotrophicum).